We begin with the raw amino-acid sequence, 263 residues long: 4-hydroxy-tetrahydrodipicolinate reductase (263 aa).

NAD(+) is bound by residues 7 to 12 (GFKGRM), 96 to 98 (GTT), and 122 to 125 (APNF). The active-site Proton donor/acceptor is the histidine 152. Histidine 153 contributes to the (S)-2,3,4,5-tetrahydrodipicolinate binding site. Lysine 156 serves as the catalytic Proton donor. 162-163 (GT) lines the (S)-2,3,4,5-tetrahydrodipicolinate pocket.

The protein belongs to the DapB family.

It is found in the cytoplasm. It catalyses the reaction (S)-2,3,4,5-tetrahydrodipicolinate + NAD(+) + H2O = (2S,4S)-4-hydroxy-2,3,4,5-tetrahydrodipicolinate + NADH + H(+). The catalysed reaction is (S)-2,3,4,5-tetrahydrodipicolinate + NADP(+) + H2O = (2S,4S)-4-hydroxy-2,3,4,5-tetrahydrodipicolinate + NADPH + H(+). It functions in the pathway amino-acid biosynthesis; L-lysine biosynthesis via DAP pathway; (S)-tetrahydrodipicolinate from L-aspartate: step 4/4. Its function is as follows. Catalyzes the conversion of 4-hydroxy-tetrahydrodipicolinate (HTPA) to tetrahydrodipicolinate. In Listeria monocytogenes serotype 4b (strain F2365), this protein is 4-hydroxy-tetrahydrodipicolinate reductase.